Consider the following 110-residue polypeptide: MGQNPKRLLKRAEFLAVRRGEKRRGRFFLVEVLDRGDGGVPRVGYTVTKKVGNAVVRNRVRRRLKEAVRVHAADDMVPGNDYVIVGRDDALRAPFGQLKAELSRRFRGTR.

It belongs to the RnpA family. As to quaternary structure, consists of a catalytic RNA component (M1 or rnpB) and a protein subunit.

It carries out the reaction Endonucleolytic cleavage of RNA, removing 5'-extranucleotides from tRNA precursor.. In terms of biological role, RNaseP catalyzes the removal of the 5'-leader sequence from pre-tRNA to produce the mature 5'-terminus. It can also cleave other RNA substrates such as 4.5S RNA. The protein component plays an auxiliary but essential role in vivo by binding to the 5'-leader sequence and broadening the substrate specificity of the ribozyme. The protein is Ribonuclease P protein component of Mesorhizobium japonicum (strain LMG 29417 / CECT 9101 / MAFF 303099) (Mesorhizobium loti (strain MAFF 303099)).